Consider the following 149-residue polypeptide: MAKIQVILLEDVAGQGRKGEIVTVSDGYAHNFLLKGKKGVLATPEELQKIENRKKKEAKKQEEERNKSLELKKLLESKVLDIPVKAGENGKLFGAITSKEIASQIKEELGLDIDKKKIEANIKNLGPDEVHIKLFTDVKAVIKVNVIAK.

The protein belongs to the bacterial ribosomal protein bL9 family.

Functionally, binds to the 23S rRNA. The protein is Large ribosomal subunit protein bL9 of Fusobacterium nucleatum subsp. nucleatum (strain ATCC 25586 / DSM 15643 / BCRC 10681 / CIP 101130 / JCM 8532 / KCTC 2640 / LMG 13131 / VPI 4355).